We begin with the raw amino-acid sequence, 104 residues long: ATP-dependent Clp protease adapter protein ClpS (104 aa).

This sequence belongs to the ClpS family. As to quaternary structure, binds to the N-terminal domain of the chaperone ClpA.

Its function is as follows. Involved in the modulation of the specificity of the ClpAP-mediated ATP-dependent protein degradation. The polypeptide is ATP-dependent Clp protease adapter protein ClpS (Burkholderia thailandensis (strain ATCC 700388 / DSM 13276 / CCUG 48851 / CIP 106301 / E264)).